Reading from the N-terminus, the 125-residue chain is Probable endoribonuclease HigB1 (125 aa).

This sequence belongs to the mycobacterial HigB family.

Functionally, toxic component of an atypical, type II toxin-antitoxin chaperone (TAC) system. Probably an endoribonuclease, neutralized by its cognate antitoxin HigA which also requires SecB-like chaperone MT2006 (AC Q7D7P7). This Mycobacterium tuberculosis (strain CDC 1551 / Oshkosh) protein is Probable endoribonuclease HigB1.